The primary structure comprises 511 residues: MEEMTPAVAMTLSLAANTMCESSPVEITQLKNVTDAADLLSDSENQSFCNGGTECTMEDVSELEEVGEQDLLKTLSDTRSGSSNVFDEDDVLSVVEDNSAVISEGLLVVDAGSELSLSNTAMEIDNGRVLATAIIVGESSIEQVPTAEVLIAGVNQDTNTSEVVIRLPDENSNHLVKGRSVYELDCIPLWGTVSIQGNRSEMEDAFAVSPHFLKLPIKMLMGDHEGMSPSLTHLTGHFFGVYDGHGGHKVADYCRDRLHFALAEEIERIKDELCKRNTGEGRQVQWDKVFTSCFLTVDGEIEGKIGRAVVGSSDKVLEAVASETVGSTAVVALVCSSHIVVSNCGDSRAVLFRGKEAMPLSVDHKPDREDEYARIENAGGKVIQWQGARVFGVLAMSRSIGDRYLKPYVIPEPEVTFMPRSREDECLILASDGLWDVMNNQEVCEIARRRILMWHKKNGAPPLAERGKGIDPACQAAADYLSMLALQKGSKDNISIIVIDLKAQRKFKTRT.

The first 22 residues, 1-22 (MEEMTPAVAMTLSLAANTMCES), serve as a signal peptide directing secretion. Residues 189–501 (LWGTVSIQGN…DNISIIVIDL (313 aa)) enclose the PPM-type phosphatase domain. Mn(2+) contacts are provided by Asp-243, Gly-244, Asp-432, and Asp-492.

This sequence belongs to the PP2C family. In terms of assembly, interacts with SWI3B (via N-terminus). Interacts with ABA-bounded PYR1, PYL1, PYL2, PYL3, PYL4, PYL5, PYL6, PYL8 and PYL9, and with free PYL2, PYL3, PYL4, PYL10 and PYL13. Requires Mg(2+) as cofactor. Mn(2+) is required as a cofactor. In terms of tissue distribution, expressed in seeds, roots, stems, leaves and flowers, especially in meristematic tissues, guard cells, embryo and siliques.

It is found in the cytoplasm. The protein resides in the nucleus. It catalyses the reaction O-phospho-L-seryl-[protein] + H2O = L-seryl-[protein] + phosphate. The enzyme catalyses O-phospho-L-threonyl-[protein] + H2O = L-threonyl-[protein] + phosphate. Its activity is regulated as follows. Repressed by PYR/PYL/RCAR ABA receptors in an ABA-dependent manner. In terms of biological role, key component and repressor of the abscisic acid (ABA) signaling pathway that regulates numerous ABA responses, such as stomatal closure, seed germination and inhibition of vegetative growth. Confers enhanced sensitivity to drought. This chain is Protein phosphatase 2C 16 (HAB1), found in Arabidopsis thaliana (Mouse-ear cress).